A 263-amino-acid chain; its full sequence is Endonuclease 8 (263 aa).

The Schiff-base intermediate with DNA role is filled by Pro-2. Glu-3 serves as the catalytic Proton donor. The active-site Proton donor; for beta-elimination activity is Lys-53. Positions 70, 125, and 169 each coordinate DNA. An FPG-type zinc finger spans residues 229-263 (KVFHRDGELCERCGGIIEKTTLSSRPFYWCPGCQH). The active-site Proton donor; for delta-elimination activity is Arg-253.

Belongs to the FPG family. Zn(2+) serves as cofactor.

It carries out the reaction 2'-deoxyribonucleotide-(2'-deoxyribose 5'-phosphate)-2'-deoxyribonucleotide-DNA = a 3'-end 2'-deoxyribonucleotide-(2,3-dehydro-2,3-deoxyribose 5'-phosphate)-DNA + a 5'-end 5'-phospho-2'-deoxyribonucleoside-DNA + H(+). Its function is as follows. Involved in base excision repair of DNA damaged by oxidation or by mutagenic agents. Acts as a DNA glycosylase that recognizes and removes damaged bases. Has a preference for oxidized pyrimidines, such as thymine glycol, 5,6-dihydrouracil and 5,6-dihydrothymine. Has AP (apurinic/apyrimidinic) lyase activity and introduces nicks in the DNA strand. Cleaves the DNA backbone by beta-delta elimination to generate a single-strand break at the site of the removed base with both 3'- and 5'-phosphates. The sequence is that of Endonuclease 8 from Escherichia coli (strain 55989 / EAEC).